The chain runs to 281 residues: Diphthine methyl ester synthase (281 aa).

S-adenosyl-L-methionine-binding positions include Leu-9, Asp-84, Gly-87, 112 to 113, and Leu-163; that span reads SI. Ser-171 bears the Phosphoserine mark. Val-225 and His-250 together coordinate S-adenosyl-L-methionine.

The protein belongs to the diphthine synthase family.

It carries out the reaction 2-[(3S)-amino-3-carboxypropyl]-L-histidyl-[translation elongation factor 2] + 4 S-adenosyl-L-methionine = diphthine methyl ester-[translation elongation factor 2] + 4 S-adenosyl-L-homocysteine + 3 H(+). Its pathway is protein modification; peptidyl-diphthamide biosynthesis. Its function is as follows. S-adenosyl-L-methionine-dependent methyltransferase that catalyzes four methylations of the modified target histidine residue in translation elongation factor 2 (EF-2), to form an intermediate called diphthine methyl ester. The four successive methylation reactions represent the second step of diphthamide biosynthesis. This chain is Diphthine methyl ester synthase (Dph5), found in Mus musculus (Mouse).